Reading from the N-terminus, the 316-residue chain is Acetyl-coenzyme A carboxylase carboxyl transferase subunit alpha (316 aa).

Positions 39–293 (KLEEKNAQLT…KKHLQANLTN (255 aa)) constitute a CoA carboxyltransferase C-terminal domain.

It belongs to the AccA family. As to quaternary structure, acetyl-CoA carboxylase is a heterohexamer composed of biotin carboxyl carrier protein (AccB), biotin carboxylase (AccC) and two subunits each of ACCase subunit alpha (AccA) and ACCase subunit beta (AccD).

It is found in the cytoplasm. It catalyses the reaction N(6)-carboxybiotinyl-L-lysyl-[protein] + acetyl-CoA = N(6)-biotinyl-L-lysyl-[protein] + malonyl-CoA. Its pathway is lipid metabolism; malonyl-CoA biosynthesis; malonyl-CoA from acetyl-CoA: step 1/1. Its function is as follows. Component of the acetyl coenzyme A carboxylase (ACC) complex. First, biotin carboxylase catalyzes the carboxylation of biotin on its carrier protein (BCCP) and then the CO(2) group is transferred by the carboxyltransferase to acetyl-CoA to form malonyl-CoA. The protein is Acetyl-coenzyme A carboxylase carboxyl transferase subunit alpha of Coxiella burnetii (strain CbuK_Q154) (Coxiella burnetii (strain Q154)).